Consider the following 618-residue polypeptide: 1-deoxy-D-xylulose-5-phosphate synthase (618 aa).

Residues H76 and 117 to 119 each bind thiamine diphosphate; that span reads GHS. Residue D148 participates in Mg(2+) binding. Thiamine diphosphate-binding positions include 149–150, N177, Y284, and E366; that span reads GA. Residue N177 participates in Mg(2+) binding.

The protein belongs to the transketolase family. DXPS subfamily. As to quaternary structure, homodimer. Mg(2+) serves as cofactor. The cofactor is thiamine diphosphate.

The enzyme catalyses D-glyceraldehyde 3-phosphate + pyruvate + H(+) = 1-deoxy-D-xylulose 5-phosphate + CO2. It functions in the pathway metabolic intermediate biosynthesis; 1-deoxy-D-xylulose 5-phosphate biosynthesis; 1-deoxy-D-xylulose 5-phosphate from D-glyceraldehyde 3-phosphate and pyruvate: step 1/1. In terms of biological role, catalyzes the acyloin condensation reaction between C atoms 2 and 3 of pyruvate and glyceraldehyde 3-phosphate to yield 1-deoxy-D-xylulose-5-phosphate (DXP). The protein is 1-deoxy-D-xylulose-5-phosphate synthase of Dechloromonas aromatica (strain RCB).